Consider the following 215-residue polypeptide: MQSLITYIALVFSLFVSSAIGLHLEVPALPNPQPVCIRDFVQENQMVVVNIKTDGSKGDGQRLDLKVTDSLGNEYRNKKDVVGHANVAFTSQHNAAIDICLTNYLDNKWSKHQQTVRSVELDIESGAAARDWNALQASEKLKPVEVELKRIESITEEIVEELRYLKAREERMRDTNESTNSRVKWFSIVVIASLVGFGVWQIQYLRHYFKVKHII.

The N-terminal stretch at 1–21 (MQSLITYIALVFSLFVSSAIG) is a signal peptide. The Lumenal segment spans residues 22–184 (LHLEVPALPN…TNESTNSRVK (163 aa)). Residues 34-125 (PVCIRDFVQE…VRSVELDIES (92 aa)) form the GOLD domain. Residues 185–205 (WFSIVVIASLVGFGVWQIQYL) traverse the membrane as a helical segment. The Cytoplasmic segment spans residues 206-215 (RHYFKVKHII).

This sequence belongs to the EMP24/GP25L family.

It localises to the endoplasmic reticulum membrane. Its subcellular location is the golgi apparatus membrane. Constituent of COPII-coated endoplasmic reticulum-derived transport vesicles. Required for efficient transport of a subset of secretory proteins to the Golgi. Facilitates retrograde transport from the Golgi to the endoplasmic reticulum. This is Endoplasmic reticulum vesicle protein 25 (ERV25) from Candida albicans (strain SC5314 / ATCC MYA-2876) (Yeast).